The primary structure comprises 339 residues: Type IV secretion system protein PtlH homolog (339 aa).

The protein belongs to the GSP E family.

This Bordetella parapertussis (strain 12822 / ATCC BAA-587 / NCTC 13253) protein is Type IV secretion system protein PtlH homolog (ptlH).